A 476-amino-acid chain; its full sequence is FAD-dependent monooxygenase dpasE (476 aa).

A signal peptide spans 1 to 21; sequence MSQPAFKIIIVGCSVTGLTLA. Glu-35, Ala-49, and Arg-109 together coordinate FAD. Residues Asn-190 and Asn-219 are each glycosylated (N-linked (GlcNAc...) asparagine). FAD-binding residues include Asp-308 and Ala-321. The chain crosses the membrane as a helical span at residues 441-461; sequence GAGFWITAFLSLSLLAVAATM.

It belongs to the paxM FAD-dependent monooxygenase family. FAD serves as cofactor.

The protein resides in the membrane. It participates in secondary metabolite biosynthesis; terpenoid biosynthesis. Functionally, FAD-dependent monooxygenase; part of the gene cluster that mediates the biosynthesis of the diterpenoid pyrones subglutinols A and B. The first step of the pathway is the synthesis of the alpha-pyrone moiety by the polyketide synthase dpasA via condensation of one acetyl-CoA starter unit with 3 malonyl-CoA units and 2 methylations. The alpha-pyrone is then combined with geranylgeranyl pyrophosphate (GGPP) formed by the GGPP synthase dpasD through the action of the prenyltransferase dpasC to yield a linear alpha-pyrone diterpenoid. Subsequent steps in the diterpenoid pyrone biosynthetic pathway involve the decalin core formation, which is initiated by the epoxidation of the C10-C11 olefin by the FAD-dependent oxidoreductase dpasE, and is followed by a cyclization cascade catalyzed by the terpene cyclase dpasB. The FAD-linked oxidoreductase dpasF is then involved in tetrahydrofuran (THF) ring formation at the C5 unit to complete the formation of subglutinols A and B. DpasF possesses also an additional catalytic ability of multi-step oxidations to generate a new DDP analog with an enone system at the C5 named FDDP A. This Apiospora sacchari (Arthrinium sacchari) protein is FAD-dependent monooxygenase dpasE.